A 229-amino-acid polypeptide reads, in one-letter code: Small ribosomal subunit protein uS5 (229 aa).

Positions 61-124 constitute an S5 DRBM domain; the sequence is LEEQVLDVKL…AHAKLSLIKV (64 aa).

The protein belongs to the universal ribosomal protein uS5 family. In terms of assembly, part of the 30S ribosomal subunit. Contacts protein S4.

With S4 and S12 plays an important role in translational accuracy. This Methanococcus maripaludis (strain C7 / ATCC BAA-1331) protein is Small ribosomal subunit protein uS5.